Consider the following 940-residue polypeptide: Receptor-like protein 9b (940 aa).

The first 28 residues, 1-28 (MLMMFSPAFVMVMDLMVLVMMIMMMVSS), serve as a signal peptide directing secretion. The Extracellular segment spans residues 29 to 895 (LDAHGHISCI…GDEETTIDME (867 aa)). N-linked (GlcNAc...) asparagine glycans are attached at residues N53, N63, N66, N101, N115, and N151. 16 LRR repeats span residues 108–136 (FGEL…SFER), 137–163 (LKNL…TASS), 165–185 (KTLI…ELIN), 186–211 (LRNL…NFHN), 213–232 (QGLD…LCQL), 233–255 (KNLR…CFDS), 257–279 (TQLQ…LIRN), 281–304 (DSVE…LIAN), 306–330 (SKLK…SLQP), 331–354 (KFQL…IQHQ), 355–378 (KDLH…LLEK), 379–402 (YPNL…RLLN), 403–426 (HTLQ…IGKV), 427–450 (LPNI…SFGE), 452–475 (KDIK…FLIG), and 477–502 (SSLH…NFGS). N-linked (GlcNAc...) asparagine glycosylation is found at N270 and N304. Residues N361, N389, and N402 are each glycosylated (N-linked (GlcNAc...) asparagine). 2 N-linked (GlcNAc...) asparagine glycosylation sites follow: N434 and N463. An LRR 17; degenerate repeat occupies 503–522 (LVVLIANNNLFTGIADGLRN). LRR repeat units lie at residues 523–546 (VQSL…WFGG), 547–570 (FFFA…LFSK), 571–593 (PTFK…HFTG), 595–615 (DMSL…STLI), 616–639 (KDVL…VKNE), 641–662 (ILSL…LCGL), 663–686 (RSIR…LNNV), 752–776 (FNFM…LGDL), 777–799 (QRIR…SFSN), 801–824 (TDIE…LSKL), and 826–849 (YMVV…KFST). N-linked (GlcNAc...) asparagine glycosylation is present at N685. 2 N-linked (GlcNAc...) asparagine glycosylation sites follow: N783 and N799. N-linked (GlcNAc...) asparagine glycans are attached at residues N831, N836, N867, and N873. The chain crosses the membrane as a helical span at residues 896–916 (IFYWSLAATYGVTWITFIVFL). The Cytoplasmic segment spans residues 917–940 (CFDSPWRRVWFHFVDAFISLFKCV).

It belongs to the RLP family.

The protein resides in the cell membrane. In Arabidopsis thaliana (Mouse-ear cress), this protein is Receptor-like protein 9b.